The primary structure comprises 396 residues: Elongation factor Tu (396 aa).

In terms of domain architecture, tr-type G spans 10-205 (KSHANIGTIG…AVDEYIPTPE (196 aa)). Residues 19-26 (GHVDHGKT) are G1. GTP is bound at residue 19 to 26 (GHVDHGKT). T26 is a binding site for Mg(2+). Residues 61–65 (GITIS) are G2. The tract at residues 82-85 (DCPG) is G3. GTP is bound by residues 82–86 (DCPGH) and 137–140 (NKCD). Residues 137 to 140 (NKCD) are G4. Positions 175–177 (SAL) are G5. T385 is modified (phosphothreonine).

The protein belongs to the TRAFAC class translation factor GTPase superfamily. Classic translation factor GTPase family. EF-Tu/EF-1A subfamily. As to quaternary structure, monomer. Interacts with BrxC. Phosphorylated on Thr-385 in vitro by PrkC in the presence of poly-L-lysine or myelin basic protein, dephosphorylated by PrpC.

Its subcellular location is the cytoplasm. The enzyme catalyses GTP + H2O = GDP + phosphate + H(+). Functionally, GTP hydrolase that promotes the GTP-dependent binding of aminoacyl-tRNA to the A-site of ribosomes during protein biosynthesis. The polypeptide is Elongation factor Tu (Bacillus subtilis (strain 168)).